Here is a 389-residue protein sequence, read N- to C-terminus: (2R)-sulfolactate sulfo-lyase subunit beta (389 aa).

Belongs to the UxaA family. As to quaternary structure, (2R)-sulfolactate sulfo-lyase is composed of a SuyA and a SuyB subunit.

Its subcellular location is the cytoplasm. The enzyme catalyses (2R)-3-sulfolactate = sulfite + pyruvate + H(+). Together with SuyA, desulfonates sulfolactate to pyruvate and sulfite. This chain is (2R)-sulfolactate sulfo-lyase subunit beta (suyB), found in Chromohalobacter salexigens (strain ATCC BAA-138 / DSM 3043 / CIP 106854 / NCIMB 13768 / 1H11).